A 279-amino-acid polypeptide reads, in one-letter code: Urease accessory protein UreD (279 aa).

It belongs to the UreD family. In terms of assembly, ureD, UreF and UreG form a complex that acts as a GTP-hydrolysis-dependent molecular chaperone, activating the urease apoprotein by helping to assemble the nickel containing metallocenter of UreC. The UreE protein probably delivers the nickel.

It is found in the cytoplasm. In terms of biological role, required for maturation of urease via the functional incorporation of the urease nickel metallocenter. This is Urease accessory protein UreD from Nitrosospira multiformis (strain ATCC 25196 / NCIMB 11849 / C 71).